Reading from the N-terminus, the 34-residue chain is Antimicrobial peptide Alo-2 (34 aa).

3 disulfide bridges follow: cysteine 1–cysteine 18, cysteine 8–cysteine 22, and cysteine 17–cysteine 33.

The protein resides in the secreted. Its function is as follows. Has antifungal activity against C.glabrata. The protein is Antimicrobial peptide Alo-2 of Acrocinus longimanus (Giant harlequin beetle).